We begin with the raw amino-acid sequence, 160 residues long: MMVKAVKKKTVTKINKKTSAPAAVKIKSRRLSPLADIDPDNAVQVLNRLWEVVMQRRDADPAVSHSARLLSRGIGKVAQKFGEEAVECLIEAVSGDKEALIGESADVLYHLLVLWVAVGVEPAEVWRELTKREGISGIAEKASRAKILPRAAGLKTTKIP.

The protein belongs to the PRA-PH family.

The protein localises to the cytoplasm. The catalysed reaction is 1-(5-phospho-beta-D-ribosyl)-ATP + H2O = 1-(5-phospho-beta-D-ribosyl)-5'-AMP + diphosphate + H(+). It participates in amino-acid biosynthesis; L-histidine biosynthesis; L-histidine from 5-phospho-alpha-D-ribose 1-diphosphate: step 2/9. This Granulibacter bethesdensis (strain ATCC BAA-1260 / CGDNIH1) protein is Phosphoribosyl-ATP pyrophosphatase.